The following is a 252-amino-acid chain: Proteasome subunit alpha type-3 (252 aa).

Belongs to the peptidase T1A family. In terms of assembly, the 26S proteasome consists of a 20S proteasome core and two 19S regulatory subunits. The 20S proteasome core is composed of 28 subunits that are arranged in four stacked rings, resulting in a barrel-shaped structure. The two end rings are each formed by seven alpha subunits, and the two central rings are each formed by seven beta subunits. The catalytic chamber with the active sites is on the inside of the barrel.

It localises to the cytoplasm. The protein localises to the nucleus. Its function is as follows. The proteasome is a multicatalytic proteinase complex which is characterized by its ability to cleave peptides with Arg, Phe, Tyr, Leu, and Glu adjacent to the leaving group at neutral or slightly basic pH. The proteasome has an ATP-dependent proteolytic activity. This chain is Proteasome subunit alpha type-3, found in Acanthamoeba castellanii (Amoeba).